The chain runs to 410 residues: Divergent protein kinase domain 1A (410 aa).

The Cytoplasmic portion of the chain corresponds to 1–5 (MARLS). A helical transmembrane segment spans residues 6-26 (YVRIKYLFFSWLAVFIGSWVI). The Lumenal portion of the chain corresponds to 27 to 410 (YVRYNSYTEL…WKKISHTNDS (384 aa)).

This sequence belongs to the DIPK family. In terms of processing, among the many cysteines in the lumenal domain, most are probably involved in disulfide bonds.

The protein resides in the endoplasmic reticulum membrane. This is Divergent protein kinase domain 1A (dipk1a) from Xenopus laevis (African clawed frog).